The primary structure comprises 537 residues: Myosin-binding protein H (537 aa).

Over residues 1 to 25 (MTGKTAPAAAKKAPAAKKAPAPASK) the composition is skewed to low complexity. The disordered stretch occupies residues 1–138 (MTGKTAPAAA…KPKEEPPSVP (138 aa)). Positions 26–69 (KAPEPAPKEKPAPTPKEGHAPTPKEEHAPPPKEEHAPPPKEEHA) are enriched in basic and acidic residues. A compositionally biased stretch (low complexity) spans 87–104 (EQPAAPAAEHAPTPTHEA). Residues 112–124 (PPPAAPAEAPAPE) show a composition bias toward pro residues. The Fibronectin type-III 1 domain occupies 137 to 232 (VPLSLAVEEV…LEQPVLIREI (96 aa)). One can recognise an Ig-like C2-type 1 domain in the interval 236–324 (PRIRLPRQLR…NGAEDKAILD (89 aa)). Positions 333 to 428 (PPQNLKLVDV…AAGVAHIKKT (96 aa)) constitute a Fibronectin type-III 2 domain. The region spanning 444–528 (PKFTQPLTDR…VNPLGEASVD (85 aa)) is the Ig-like C2-type 2 domain.

The protein belongs to the immunoglobulin superfamily. MyBP family. As to expression, skeletal muscle. Seems to be also expressed in the slow tonic ald muscle. Not detected in gizzard or heart.

Its function is as follows. Binds to myosin; probably involved in interaction with thick myofilaments in the A-band. In Gallus gallus (Chicken), this protein is Myosin-binding protein H (MYBPH).